Here is a 286-residue protein sequence, read N- to C-terminus: tRNA (guanine-N(1)-)-methyltransferase (286 aa).

S-adenosyl-L-methionine is bound by residues Gly-116 and 140 to 145 (IGDYVL). The segment at 232–286 (DALPPGSLTPHEEALAAEARLHAGRSAETPPPAGAAGSQAEGPPGTSPSDAAVAH) is disordered.

Belongs to the RNA methyltransferase TrmD family. In terms of assembly, homodimer.

Its subcellular location is the cytoplasm. The catalysed reaction is guanosine(37) in tRNA + S-adenosyl-L-methionine = N(1)-methylguanosine(37) in tRNA + S-adenosyl-L-homocysteine + H(+). Its function is as follows. Specifically methylates guanosine-37 in various tRNAs. This chain is tRNA (guanine-N(1)-)-methyltransferase, found in Acidothermus cellulolyticus (strain ATCC 43068 / DSM 8971 / 11B).